The sequence spans 598 residues: Phospholipase B-like protein G (598 aa).

The signal sequence occupies residues 1 to 24 (MIKSYYLFFIILIFLIFINNFILC). Residues N50, N98, N173, N341, N368, N450, N480, N526, and N576 are each glycosylated (N-linked (GlcNAc...) asparagine).

This sequence belongs to the phospholipase B-like family.

The protein resides in the secreted. Its function is as follows. Probable phospholipase. The chain is Phospholipase B-like protein G (plbG) from Dictyostelium discoideum (Social amoeba).